The chain runs to 247 residues: DNA repair protein RecO (247 aa).

This sequence belongs to the RecO family.

Involved in DNA repair and RecF pathway recombination. This chain is DNA repair protein RecO, found in Methylocella silvestris (strain DSM 15510 / CIP 108128 / LMG 27833 / NCIMB 13906 / BL2).